Consider the following 335-residue polypeptide: Serine/threonine-protein kinase crk1 (335 aa).

The Protein kinase domain maps to Y11–F292. ATP contacts are provided by residues V17 to V25 and K40. D133 functions as the Proton acceptor in the catalytic mechanism. At S162 the chain carries Phosphoserine. At S165 the chain carries Phosphoserine; by CAK. The residue at position 318 (S318) is a Phosphoserine.

The protein belongs to the protein kinase superfamily. CMGC Ser/Thr protein kinase family. CDC2/CDKX subfamily. As to quaternary structure, one of the nine subunits forming the core-TFIIH basal transcription factor. Interacts with mcs2 and tfb3.

The protein localises to the cytoplasm. It localises to the nucleus. It catalyses the reaction [DNA-directed RNA polymerase] + ATP = phospho-[DNA-directed RNA polymerase] + ADP + H(+). In terms of biological role, protein kinase essential for cell proliferation, where it is required for completion of cytokinesis. Phosphorylates the C-terminal repeat domain (CTD) of RNA polymerase II. The chain is Serine/threonine-protein kinase crk1 (crk1) from Schizosaccharomyces pombe (strain 972 / ATCC 24843) (Fission yeast).